A 319-amino-acid chain; its full sequence is Acetaldehyde dehydrogenase 1 (319 aa).

The active-site Acyl-thioester intermediate is the Cys-129. NAD(+)-binding positions include 160-168 (SAGPGTRAN) and Asn-287.

This sequence belongs to the acetaldehyde dehydrogenase family.

The catalysed reaction is acetaldehyde + NAD(+) + CoA = acetyl-CoA + NADH + H(+). In Burkholderia lata (strain ATCC 17760 / DSM 23089 / LMG 22485 / NCIMB 9086 / R18194 / 383), this protein is Acetaldehyde dehydrogenase 1.